A 609-amino-acid polypeptide reads, in one-letter code: Rhotekin-2 (609 aa).

In terms of domain architecture, REM-1 spans 5 to 81; that stretch reads SLRGPALRLA…LQKLEEQIAN (77 aa). Residues 56 to 91 are a coiled coil; it reads KNLMVCNARLMAYTSELQKLEEQIANQTGRCDVKFE. The PH domain occupies 286–393; that stretch reads EDAFAGFLNQ…WMEAFWQHFF (108 aa). Disordered regions lie at residues 495-520 and 554-609; these read HDEKGKKRQAPLPPSDKLPFSLKSQS and KPMA…QAQV. Basic and acidic residues predominate over residues 569–582; the sequence is RLSDGEHTDTKTNF.

Expressed in lymphocytes, CD4 positive T-cells and bone marrow-derived cells. Also expressed in lung, colon, thymus and brain.

May play an important role in lymphopoiesis. This Homo sapiens (Human) protein is Rhotekin-2 (RTKN2).